The primary structure comprises 317 residues: Beta-ketoacyl-[acyl-carrier-protein] synthase III (317 aa).

Residues C112 and H244 contribute to the active site. The ACP-binding stretch occupies residues 245–249; sequence QANLR. N274 is a catalytic residue.

The protein belongs to the thiolase-like superfamily. FabH family. Homodimer.

The protein resides in the cytoplasm. The enzyme catalyses malonyl-[ACP] + acetyl-CoA + H(+) = 3-oxobutanoyl-[ACP] + CO2 + CoA. It functions in the pathway lipid metabolism; fatty acid biosynthesis. Functionally, catalyzes the condensation reaction of fatty acid synthesis by the addition to an acyl acceptor of two carbons from malonyl-ACP. Catalyzes the first condensation reaction which initiates fatty acid synthesis and may therefore play a role in governing the total rate of fatty acid production. Possesses both acetoacetyl-ACP synthase and acetyl transacylase activities. Its substrate specificity determines the biosynthesis of branched-chain and/or straight-chain of fatty acids. The sequence is that of Beta-ketoacyl-[acyl-carrier-protein] synthase III from Escherichia coli O9:H4 (strain HS).